The following is a 448-amino-acid chain: tRNA-2-methylthio-N(6)-dimethylallyladenosine synthase (448 aa).

Residues 2–119 (KKLYIKTFGC…LSDLIAKRRE (118 aa)) form the MTTase N-terminal domain. The [4Fe-4S] cluster site is built by Cys11, Cys48, Cys82, Cys156, Cys160, and Cys163. A Radical SAM core domain is found at 142–377 (RQTRGSAYVS…LVESQANQIS (236 aa)). The 67-residue stretch at 378–444 (QKMLGNIERV…NYTLRGKLVE (67 aa)) folds into the TRAM domain.

It belongs to the methylthiotransferase family. MiaB subfamily. As to quaternary structure, monomer. [4Fe-4S] cluster is required as a cofactor.

It is found in the cytoplasm. It carries out the reaction N(6)-dimethylallyladenosine(37) in tRNA + (sulfur carrier)-SH + AH2 + 2 S-adenosyl-L-methionine = 2-methylsulfanyl-N(6)-dimethylallyladenosine(37) in tRNA + (sulfur carrier)-H + 5'-deoxyadenosine + L-methionine + A + S-adenosyl-L-homocysteine + 2 H(+). Catalyzes the methylthiolation of N6-(dimethylallyl)adenosine (i(6)A), leading to the formation of 2-methylthio-N6-(dimethylallyl)adenosine (ms(2)i(6)A) at position 37 in tRNAs that read codons beginning with uridine. The protein is tRNA-2-methylthio-N(6)-dimethylallyladenosine synthase of Polynucleobacter necessarius subsp. necessarius (strain STIR1).